A 233-amino-acid polypeptide reads, in one-letter code: 27 kDa hemolymph glycoprotein (233 aa).

The first 17 residues, 1-17, serve as a signal peptide directing secretion; sequence MIWKTLIVAFMATAVLA. 2 N-linked (GlcNAc...) asparagine glycosylation sites follow: asparagine 125 and asparagine 156.

Belongs to the UPF0408 family. In terms of processing, N-glycosylated. Hemolymph.

It is found in the secreted. The sequence is that of 27 kDa hemolymph glycoprotein from Manduca sexta (Tobacco hawkmoth).